A 255-amino-acid chain; its full sequence is Type III pantothenate kinase (255 aa).

6 to 13 (DVGNSYTM) contributes to the ATP binding site. 107–110 (GADR) contributes to the substrate binding site. D109 acts as the Proton acceptor in catalysis. D129 provides a ligand contact to K(+). T132 is an ATP binding site. T183 is a binding site for substrate.

The protein belongs to the type III pantothenate kinase family. In terms of assembly, homodimer. It depends on NH4(+) as a cofactor. The cofactor is K(+).

It localises to the cytoplasm. It carries out the reaction (R)-pantothenate + ATP = (R)-4'-phosphopantothenate + ADP + H(+). It functions in the pathway cofactor biosynthesis; coenzyme A biosynthesis; CoA from (R)-pantothenate: step 1/5. Functionally, catalyzes the phosphorylation of pantothenate (Pan), the first step in CoA biosynthesis. This Petrotoga mobilis (strain DSM 10674 / SJ95) protein is Type III pantothenate kinase.